A 227-amino-acid polypeptide reads, in one-letter code: Cytochrome c oxidase subunit 2 (227 aa).

Residues 1–14 (MAYPVQLGFQDAAS) are Mitochondrial intermembrane-facing. Residues 15-45 (PIMEELLYFHDHTLMIVFLISSLVLYIISLM) traverse the membrane as a helical segment. The Mitochondrial matrix segment spans residues 46 to 59 (LTTKLMHTSTMDAQ). Residues 60 to 87 (EVETVWTILPAIILILIALPSLRILYMM) traverse the membrane as a helical segment. Residues 88–227 (DEITTPSLTL…HFEEWLLSMF (140 aa)) lie on the Mitochondrial intermembrane side of the membrane. Positions 161, 196, 198, 200, 204, and 207 each coordinate Cu cation. Residue Glu-198 participates in Mg(2+) binding.

Belongs to the cytochrome c oxidase subunit 2 family. Component of the cytochrome c oxidase (complex IV, CIV), a multisubunit enzyme composed of 14 subunits. The complex is composed of a catalytic core of 3 subunits MT-CO1, MT-CO2 and MT-CO3, encoded in the mitochondrial DNA, and 11 supernumerary subunits COX4I, COX5A, COX5B, COX6A, COX6B, COX6C, COX7A, COX7B, COX7C, COX8 and NDUFA4, which are encoded in the nuclear genome. The complex exists as a monomer or a dimer and forms supercomplexes (SCs) in the inner mitochondrial membrane with NADH-ubiquinone oxidoreductase (complex I, CI) and ubiquinol-cytochrome c oxidoreductase (cytochrome b-c1 complex, complex III, CIII), resulting in different assemblies (supercomplex SCI(1)III(2)IV(1) and megacomplex MCI(2)III(2)IV(2)). Found in a complex with TMEM177, COA6, COX18, COX20, SCO1 and SCO2. Interacts with TMEM177 in a COX20-dependent manner. Interacts with COX20. Interacts with COX16. It depends on Cu cation as a cofactor.

It is found in the mitochondrion inner membrane. The enzyme catalyses 4 Fe(II)-[cytochrome c] + O2 + 8 H(+)(in) = 4 Fe(III)-[cytochrome c] + 2 H2O + 4 H(+)(out). Functionally, component of the cytochrome c oxidase, the last enzyme in the mitochondrial electron transport chain which drives oxidative phosphorylation. The respiratory chain contains 3 multisubunit complexes succinate dehydrogenase (complex II, CII), ubiquinol-cytochrome c oxidoreductase (cytochrome b-c1 complex, complex III, CIII) and cytochrome c oxidase (complex IV, CIV), that cooperate to transfer electrons derived from NADH and succinate to molecular oxygen, creating an electrochemical gradient over the inner membrane that drives transmembrane transport and the ATP synthase. Cytochrome c oxidase is the component of the respiratory chain that catalyzes the reduction of oxygen to water. Electrons originating from reduced cytochrome c in the intermembrane space (IMS) are transferred via the dinuclear copper A center (CU(A)) of subunit 2 and heme A of subunit 1 to the active site in subunit 1, a binuclear center (BNC) formed by heme A3 and copper B (CU(B)). The BNC reduces molecular oxygen to 2 water molecules using 4 electrons from cytochrome c in the IMS and 4 protons from the mitochondrial matrix. This is Cytochrome c oxidase subunit 2 (MT-CO2) from Propithecus tattersalli (Golden-crowned Sifaka).